The sequence spans 393 residues: Formate-dependent phosphoribosylglycinamide formyltransferase (393 aa).

Residues 20–21 (EL) and Glu80 contribute to the N(1)-(5-phospho-beta-D-ribosyl)glycinamide site. ATP-binding positions include Arg112, Lys153, 158–163 (SSGKGQ), 193–196 (EAFI), and Glu201. Positions 117-306 (RLAAEDLNLP…EFELHVRAVL (190 aa)) constitute an ATP-grasp domain. The Mg(2+) site is built by Glu265 and Glu277. N(1)-(5-phospho-beta-D-ribosyl)glycinamide is bound by residues Asp284, Lys354, and 361–362 (RR).

This sequence belongs to the PurK/PurT family. Homodimer.

It catalyses the reaction N(1)-(5-phospho-beta-D-ribosyl)glycinamide + formate + ATP = N(2)-formyl-N(1)-(5-phospho-beta-D-ribosyl)glycinamide + ADP + phosphate + H(+). Its pathway is purine metabolism; IMP biosynthesis via de novo pathway; N(2)-formyl-N(1)-(5-phospho-D-ribosyl)glycinamide from N(1)-(5-phospho-D-ribosyl)glycinamide (formate route): step 1/1. Its function is as follows. Involved in the de novo purine biosynthesis. Catalyzes the transfer of formate to 5-phospho-ribosyl-glycinamide (GAR), producing 5-phospho-ribosyl-N-formylglycinamide (FGAR). Formate is provided by PurU via hydrolysis of 10-formyl-tetrahydrofolate. This chain is Formate-dependent phosphoribosylglycinamide formyltransferase, found in Syntrophotalea carbinolica (strain DSM 2380 / NBRC 103641 / GraBd1) (Pelobacter carbinolicus).